The chain runs to 245 residues: 14-3-3 protein theta (245 aa).

Met-1 is subject to N-acetylmethionine. An N6-acetyllysine modification is found at Lys-3. Lys-49 is modified (N6-acetyllysine; alternate). A Glycyl lysine isopeptide (Lys-Gly) (interchain with G-Cter in SUMO2); alternate cross-link involves residue Lys-49. Lys-68 carries the N6-acetyllysine modification. Tyr-82 is subject to 3'-nitrotyrosine. Ser-92 bears the Phosphoserine mark. Residue Tyr-104 is modified to 3'-nitrotyrosine. Lys-115 is subject to N6-acetyllysine. Phosphoserine; by CK1 is present on Ser-232.

This sequence belongs to the 14-3-3 family. Homodimer. Interacts with CDK16. Interacts with RGS7 (phosphorylated form). Interacts with SSH1. Interacts with CDKN1B ('Thr-198' phosphorylated form); the interaction translocates CDKN1B to the cytoplasm. Interacts with GAB2. Interacts with the 'Ser-241' phosphorylated form of PDPK1. Interacts with the 'Thr-369' phosphorylated form of DAPK2. Interacts with PI4KB, TBC1D22A and TBC1D22B. Interacts with SLITRK1. Interacts with RIPOR2. Interacts with INAVA; the interaction increases upon PRR (pattern recognition receptor) stimulation and is required for cellular signaling pathway activation and cytokine secretion. Interacts with MARK2, MARK3 and MARK4. Interacts with MEFV.

It is found in the cytoplasm. In terms of biological role, adapter protein implicated in the regulation of a large spectrum of both general and specialized signaling pathways. Binds to a large number of partners, usually by recognition of a phosphoserine or phosphothreonine motif. Binding generally results in the modulation of the activity of the binding partner. Negatively regulates the kinase activity of PDPK1. This chain is 14-3-3 protein theta (YWHAQ), found in Bos taurus (Bovine).